Consider the following 932-residue polypeptide: Protein hir1 (932 aa).

WD repeat units lie at residues 16–55 (GHRLSIFSIHIHPDGSRIATGGLDGTIRIWSTEAINRENE), 72–111 (THTGTVTSVRFSPNGQYLASGSDDRVVIIWHKEEAIPGLG), 132–171 (GHDNDIQDLCWSYDSQLVVSVGLDSSIIVWNGTTFERLKR), 174–213 (AHQSHVKGITFDPAGKYFATESDDRTIKVWRVSDFSIEKT), 222–265 (PLST…SEIN), 268–316 (GHEG…PLLS), and 320–361 (VFQK…DMVS). 2 stretches are compositionally biased toward polar residues: residues 405–426 (STTDPTLVPQSSSTPKSAQKTP) and 441–453 (TVDTNKLTASKEQ). 2 disordered regions span residues 405-470 (STTD…NEIP) and 498-520 (TPSTSRLASTQLQHTGSSQLPPQ). A compositionally biased stretch (low complexity) spans 498–507 (TPSTSRLAST).

The protein belongs to the WD repeat HIR1 family. Interacts with his3 and slm9.

The protein resides in the cytoplasm. It is found in the nucleus. Probably required for replication-independent chromatin assembly. Required for transcriptional silencing in the outer repeat (otr) centromeric repeats and the Tf2 long terminal repeat retrotransposons. Repressor of histone gene transcription in G1 arrested cells. Required for repression of htb1 gene expression outside of S phase. The protein is Protein hir1 (hip1) of Schizosaccharomyces pombe (strain 972 / ATCC 24843) (Fission yeast).